The primary structure comprises 617 residues: Proline--tRNA ligase (617 aa).

It belongs to the class-II aminoacyl-tRNA synthetase family. ProS type 1 subfamily. Homodimer.

The protein resides in the cytoplasm. The enzyme catalyses tRNA(Pro) + L-proline + ATP = L-prolyl-tRNA(Pro) + AMP + diphosphate. Catalyzes the attachment of proline to tRNA(Pro) in a two-step reaction: proline is first activated by ATP to form Pro-AMP and then transferred to the acceptor end of tRNA(Pro). As ProRS can inadvertently accommodate and process non-cognate amino acids such as alanine and cysteine, to avoid such errors it has two additional distinct editing activities against alanine. One activity is designated as 'pretransfer' editing and involves the tRNA(Pro)-independent hydrolysis of activated Ala-AMP. The other activity is designated 'posttransfer' editing and involves deacylation of mischarged Ala-tRNA(Pro). The misacylated Cys-tRNA(Pro) is not edited by ProRS. The chain is Proline--tRNA ligase from Streptococcus pneumoniae (strain 70585).